The primary structure comprises 228 residues: Protein 33K (228 aa).

The interval 1–156 (MAPKKKLQLP…GALRLAPNEP (156 aa)) is disordered. Acidic residues predominate over residues 15-53 (TDEEEYWDSQAEEVLDEEEEMMEDWDSLDEASEAEEVSD). Low complexity-rich tracts occupy residues 54 to 63 (ETPSPSVAFP) and 104 to 119 (AAPT…ATAA). Residues 171–198 (YAIFQQSRGQEQELKIKNRSLRSLTRSC) form a necessary for nuclear subcellular location region. The tract at residues 177 to 197 (SRGQEQELKIKNRSLRSLTRS) is RS-repeat; required for splicing enhancer activity.

The protein belongs to the adenoviridae splicing factor family. As to quaternary structure, homooligomer. Interacts with DBP; this interaction occurs at a unique vertex during genome packaging. Interacts with IVa2; this interaction occurs at a unique vertex during genome packaging and seems to potentiate IVa2 and 33K oligomerization. Post-translationally, phosphorylated in vitro by human PKA and PRKDC. PRKDC inhibits, whereas PKA activates the splicing factor.

The protein resides in the host nucleus. Functionally, promotes alternative splicing of late transcripts by promoting splicing at weak 3' splice sites. Required for the temporal activation of major late pre-mRNA splicing at late times of infection. Induces the splicing and expression of the late capsid vertex protein. Its function is as follows. Probably functions as the small terminase that is part of the molecular motor that translocates genomic DNA in empty capsid during DNA packaging. This motor is located at a unique vertex and comprises at least the IVa2 ATPase, the small terminase 33K and probably a portal. Forms a ring-like structure of about 17 nm in which genomic DNA is translocated into the capsid. Stimulates IVa2 ATPase activity in the presence of the viral genome. Once the DNA is packaged, the terminase detaches: the 33K protein is present in the empty particles, but not in the mature virions. Also involved in virion assembly. The polypeptide is Protein 33K (Homo sapiens (Human)).